Consider the following 611-residue polypeptide: Elongation factor 4 (611 aa).

The tr-type G domain occupies 12–193 (AVIRNFCIIA…TIVAKVPAPE (182 aa)). GTP-binding positions include 24 to 29 (DHGKST) and 140 to 143 (NKID).

The protein belongs to the TRAFAC class translation factor GTPase superfamily. Classic translation factor GTPase family. LepA subfamily.

It localises to the cell membrane. It catalyses the reaction GTP + H2O = GDP + phosphate + H(+). Its function is as follows. Required for accurate and efficient protein synthesis under certain stress conditions. May act as a fidelity factor of the translation reaction, by catalyzing a one-codon backward translocation of tRNAs on improperly translocated ribosomes. Back-translocation proceeds from a post-translocation (POST) complex to a pre-translocation (PRE) complex, thus giving elongation factor G a second chance to translocate the tRNAs correctly. Binds to ribosomes in a GTP-dependent manner. The protein is Elongation factor 4 of Cutibacterium acnes (strain DSM 16379 / KPA171202) (Propionibacterium acnes).